We begin with the raw amino-acid sequence, 124 residues long: Holo-[acyl-carrier-protein] synthase (124 aa).

Mg(2+) is bound by residues aspartate 5 and glutamate 51.

It belongs to the P-Pant transferase superfamily. AcpS family. Mg(2+) serves as cofactor.

It is found in the cytoplasm. The catalysed reaction is apo-[ACP] + CoA = holo-[ACP] + adenosine 3',5'-bisphosphate + H(+). Its function is as follows. Transfers the 4'-phosphopantetheine moiety from coenzyme A to a Ser of acyl-carrier-protein. The chain is Holo-[acyl-carrier-protein] synthase from Hydrogenobaculum sp. (strain Y04AAS1).